Here is a 341-residue protein sequence, read N- to C-terminus: Phosphate acyltransferase (341 aa).

Belongs to the PlsX family. Homodimer. Probably interacts with PlsY.

Its subcellular location is the cytoplasm. The catalysed reaction is a fatty acyl-[ACP] + phosphate = an acyl phosphate + holo-[ACP]. It functions in the pathway lipid metabolism; phospholipid metabolism. Functionally, catalyzes the reversible formation of acyl-phosphate (acyl-PO(4)) from acyl-[acyl-carrier-protein] (acyl-ACP). This enzyme utilizes acyl-ACP as fatty acyl donor, but not acyl-CoA. This is Phosphate acyltransferase from Elusimicrobium minutum (strain Pei191).